A 94-amino-acid chain; its full sequence is Parvalbumin beta 4 (94 aa).

N-acetylalanine is present on Ala1. 2 consecutive EF-hand domains span residues 36-63 (FFAI…FSAG) and 67-94 (LSDA…EFAA). Ca(2+) contacts are provided by Asp41, Asp43, Ser45, Phe47, Glu49, Glu52, Asp80, Asp82, Asp84, Met86, and Glu91.

This sequence belongs to the parvalbumin family.

Functionally, in muscle, parvalbumin is thought to be involved in relaxation after contraction. It binds two calcium ions. This is Parvalbumin beta 4 from Merluccius bilinearis (Silver hake).